We begin with the raw amino-acid sequence, 270 residues long: Tetraspanin-18 (270 aa).

At 1-15 (MRRNCCHVSFASTLK) the chain is on the cytoplasmic side. A helical membrane pass occupies residues 16-36 (ILNFVQAFIGVSIIIYSIWML). Residues 37–99 (HEYSRHLPVD…LRSLDLPAPW (63 aa)) are Extracellular-facing. The chain crosses the membrane as a helical span at residues 100–120 (FIYSFMAVGILVCIVTFIGFI). At 121-132 (AAEAINGCCLCF) the chain is on the cytoplasmic side. Residues 133 to 153 (YSILKTLLILLEAALVAYIAI) traverse the membrane as a helical segment. At 154 to 183 (DRHWEKDLPYDPTGELSSLRAFIEENIDIC) the chain is on the extracellular side. The helical transmembrane segment at 184 to 204 (KWVGIAVVAVQLLSLLLAMVL) threads the bilayer. The Cytoplasmic portion of the chain corresponds to 205–270 (RAMVSTPKPE…NQSPPVNPKG (66 aa)). The tract at residues 212 to 249 (KPELDEEEDDENPRSRTWDPLLGPQGNQAPAGSSKIEN) is disordered. Over residues 236-249 (QGNQAPAGSSKIEN) the composition is skewed to polar residues. Ser-245 carries the phosphoserine modification.

This sequence belongs to the tetraspanin (TM4SF) family. As to quaternary structure, homodimer. Constituent of tobamovirus replication complex. Expressed in rosette leaves.

Its subcellular location is the membrane. It is found in the vacuole membrane. Functionally, may be involved in the regulation of cell differentiation. Promotes intracellular multiplication of tobamoviruses, probably being a component of the replication complex. The sequence is that of Tetraspanin-18 (TOM2AH2) from Arabidopsis thaliana (Mouse-ear cress).